Reading from the N-terminus, the 269-residue chain is Sulfur carrier protein FdhD (269 aa).

The active-site Cysteine persulfide intermediate is the C111.

It belongs to the FdhD family.

It localises to the cytoplasm. Its function is as follows. Required for formate dehydrogenase (FDH) activity. Acts as a sulfur carrier protein that transfers sulfur from IscS to the molybdenum cofactor prior to its insertion into FDH. The polypeptide is Sulfur carrier protein FdhD (Brucella melitensis biotype 1 (strain ATCC 23456 / CCUG 17765 / NCTC 10094 / 16M)).